Consider the following 312-residue polypeptide: Ornithine carbamoyltransferase (312 aa).

Carbamoyl phosphate is bound by residues 59–62, Gln86, Arg110, and 137–140; these read STRT and HPCQ. L-ornithine-binding positions include Asn167, Asp231, and 235-236; that span reads SM. Carbamoyl phosphate contacts are provided by Cys271 and Arg299.

This sequence belongs to the aspartate/ornithine carbamoyltransferase superfamily. OTCase family.

Its subcellular location is the cytoplasm. It carries out the reaction carbamoyl phosphate + L-ornithine = L-citrulline + phosphate + H(+). It participates in amino-acid biosynthesis; L-arginine biosynthesis; L-arginine from L-ornithine and carbamoyl phosphate: step 1/3. Functionally, reversibly catalyzes the transfer of the carbamoyl group from carbamoyl phosphate (CP) to the N(epsilon) atom of ornithine (ORN) to produce L-citrulline. The polypeptide is Ornithine carbamoyltransferase (Methanopyrus kandleri (strain AV19 / DSM 6324 / JCM 9639 / NBRC 100938)).